Here is a 101-residue protein sequence, read N- to C-terminus: Urease subunit gamma (101 aa).

This sequence belongs to the urease gamma subunit family. In terms of assembly, heterotrimer of UreA (gamma), UreB (beta) and UreC (alpha) subunits. Three heterotrimers associate to form the active enzyme.

It localises to the cytoplasm. It carries out the reaction urea + 2 H2O + H(+) = hydrogencarbonate + 2 NH4(+). The protein operates within nitrogen metabolism; urea degradation; CO(2) and NH(3) from urea (urease route): step 1/1. This Geobacillus kaustophilus (strain HTA426) protein is Urease subunit gamma.